The chain runs to 201 residues: Small ribosomal subunit protein uS4c (201 aa).

Positions 1–14 are enriched in basic residues; the sequence is MSRYRGPRFKKIRR. The segment at 1 to 44 is disordered; sequence MSRYRGPRFKKIRRLGALPGLTSKRPRAGSDPRNQSRSGKKSQY. Residues 89–152 enclose the S4 RNA-binding domain; it reads MRLDNTLFRL…NSRTLVQNLL (64 aa).

This sequence belongs to the universal ribosomal protein uS4 family. As to quaternary structure, part of the 30S ribosomal subunit. Contacts protein S5. The interaction surface between S4 and S5 is involved in control of translational fidelity.

Its subcellular location is the plastid. It localises to the chloroplast. One of the primary rRNA binding proteins, it binds directly to 16S rRNA where it nucleates assembly of the body of the 30S subunit. In terms of biological role, with S5 and S12 plays an important role in translational accuracy. This chain is Small ribosomal subunit protein uS4c (rps4), found in Draba nemorosa (Woodland whitlowgrass).